Consider the following 109-residue polypeptide: Small serum protein 2 (109 aa).

Residues 1–19 (MRVFFSLIIFSFMLATCQG) form the signal peptide. Cystine bridges form between cysteine 21–cysteine 72, cysteine 39–cysteine 64, cysteine 59–cysteine 93, cysteine 62–cysteine 71, and cysteine 84–cysteine 107.

As to quaternary structure, forms a stable, non-covalent complex with serotriflin.

It localises to the secreted. In terms of biological role, may serve as a self-defense protein against the toxic effects of the snake venom during accidental envenomation. Does not show inhibitory activity towards brevilysin H6. The polypeptide is Small serum protein 2 (Protobothrops flavoviridis (Habu)).